A 67-amino-acid polypeptide reads, in one-letter code: MGEISITKLLVVAALVVLLFGTKKLRTLGGDLGTAIKGFKKAMNDEDVGVKKDVDGGVQAEKLSHKE.

The chain crosses the membrane as a helical span at residues 4–21 (ISITKLLVVAALVVLLFG).

It belongs to the TatA/E family. TatE subfamily.

It is found in the cell inner membrane. In terms of biological role, part of the twin-arginine translocation (Tat) system that transports large folded proteins containing a characteristic twin-arginine motif in their signal peptide across membranes. TatE shares overlapping functions with TatA. This chain is Probable Sec-independent protein translocase protein TatE, found in Salmonella arizonae (strain ATCC BAA-731 / CDC346-86 / RSK2980).